The primary structure comprises 430 residues: Asparagine--tRNA ligase (430 aa).

Belongs to the class-II aminoacyl-tRNA synthetase family. In terms of assembly, homodimer.

The protein resides in the cytoplasm. The catalysed reaction is tRNA(Asn) + L-asparagine + ATP = L-asparaginyl-tRNA(Asn) + AMP + diphosphate + H(+). This chain is Asparagine--tRNA ligase, found in Staphylococcus aureus (strain MRSA252).